Consider the following 1009-residue polypeptide: Translation initiation factor IF-2 (1009 aa).

A disordered region spans residues 1-415 (MSDENENGRP…EREKEKRRGG (415 aa)). Residues 94–110 (EELRARQRVVDAAREAQ) show a composition bias toward basic and acidic residues. Over residues 111 to 121 (ARQVAEQAAAE) the composition is skewed to low complexity. Positions 122-136 (ARARAAQEAAQREAA) are enriched in basic and acidic residues. Positions 137 to 146 (AKAAAERAAA) are enriched in low complexity. A compositionally biased stretch (pro residues) spans 147 to 174 (APPPVAQAPAAPAPAAPVTPPPAAPQAP). The segment covering 175 to 189 (RPVAQAPVAPSAPRQ) has biased composition (low complexity). 2 stretches are compositionally biased toward basic and acidic residues: residues 208 to 218 (EPSRDRRDDRP) and 251 to 287 (PRPE…RPQG). Residues 311 to 320 (GGPPRGPRPG) are compositionally biased toward pro residues. Composition is skewed to basic and acidic residues over residues 346 to 358 (MDRR…DRRK) and 403 to 415 (RARE…RRGG). Residues 505–675 (LRPPVVTIMG…LLQAEVLDLK (171 aa)) enclose the tr-type G domain. A G1 region spans residues 514–521 (GHVDHGKT). 514–521 (GHVDHGKT) lines the GTP pocket. The tract at residues 539-543 (GITQH) is G2. The tract at residues 561–564 (DTPG) is G3. GTP-binding positions include 561–565 (DTPGH) and 615–618 (NKMD). The interval 615–618 (NKMD) is G4. Residues 651–653 (SAK) form a G5 region.

This sequence belongs to the TRAFAC class translation factor GTPase superfamily. Classic translation factor GTPase family. IF-2 subfamily.

It is found in the cytoplasm. Its function is as follows. One of the essential components for the initiation of protein synthesis. Protects formylmethionyl-tRNA from spontaneous hydrolysis and promotes its binding to the 30S ribosomal subunits. Also involved in the hydrolysis of GTP during the formation of the 70S ribosomal complex. This is Translation initiation factor IF-2 from Caulobacter vibrioides (strain ATCC 19089 / CIP 103742 / CB 15) (Caulobacter crescentus).